The primary structure comprises 313 residues: Pantothenate synthetase (313 aa).

Position 43-50 (43-50) interacts with ATP; that stretch reads MGALHEGH. H50 functions as the Proton donor in the catalytic mechanism. Q75 contributes to the (R)-pantoate binding site. Residue Q75 participates in beta-alanine binding. 161–164 contacts ATP; that stretch reads GEKD. Q167 serves as a coordination point for (R)-pantoate. Residues V190 and 198–201 contribute to the ATP site; that span reads LSSR.

Belongs to the pantothenate synthetase family. As to quaternary structure, homodimer.

The protein resides in the cytoplasm. It catalyses the reaction (R)-pantoate + beta-alanine + ATP = (R)-pantothenate + AMP + diphosphate + H(+). Its pathway is cofactor biosynthesis; (R)-pantothenate biosynthesis; (R)-pantothenate from (R)-pantoate and beta-alanine: step 1/1. Catalyzes the condensation of pantoate with beta-alanine in an ATP-dependent reaction via a pantoyl-adenylate intermediate. This chain is Pantothenate synthetase, found in Mycobacterium sp. (strain KMS).